We begin with the raw amino-acid sequence, 287 residues long: F-actin-capping protein subunit beta (287 aa).

Residue Ser2 is modified to N-acetylserine. Phosphoserine is present on residues Ser85 and Ser92.

The protein belongs to the F-actin-capping protein beta subunit family. As to quaternary structure, component of the F-actin capping complex, composed of a heterodimer of an alpha and a beta subunit. Interacts with BSP1 (via C-terminus); leading to recruitment of the F-actin capping complex to actin cortical patches and the acomyosin contractile ring.

The protein resides in the cytoplasm. The protein localises to the cytoskeleton. It is found in the actin patch. It localises to the bud. Its subcellular location is the bud tip. In terms of biological role, F-actin-capping proteins bind in a Ca(2+)-independent manner to the fast growing ends of actin filaments (barbed end) thereby blocking the exchange of subunits at these ends. Unlike other capping proteins (such as gelsolin and severin), these proteins do not sever actin filaments. This Saccharomyces cerevisiae (strain ATCC 204508 / S288c) (Baker's yeast) protein is F-actin-capping protein subunit beta (CAP2).